Consider the following 1027-residue polypeptide: Presequence protease, mitochondrial (1027 aa).

Residues 1-22 constitute a mitochondrion transit peptide; sequence MIRQCWAGLRLCRALYQTSYRW. Zn(2+) is bound at residue His-98. The active-site Proton acceptor is Glu-101. Residues His-102 and Glu-199 each coordinate Zn(2+). An intrachain disulfide couples Cys-113 to Cys-550. Positions 803–827 are disordered; the sequence is RKAIRPHVVEKSSNPSPSGSEISRT. The segment covering 814–825 has biased composition (low complexity); that stretch reads SSNPSPSGSEIS.

It belongs to the peptidase M16 family. PreP subfamily. In terms of assembly, monomer and homodimer; homodimerization is induced by binding of the substrate. It depends on Zn(2+) as a cofactor. Post-translationally, a disulfide bond locks the enzyme in the closed conformation preventing substrate entry into the catalytic chamber.

The protein localises to the mitochondrion matrix. Its activity is regulated as follows. Mainly exists in a closed and catalytically competent conformation but a closed-to-open switch allows substrate entry into the catalytic chamber. Substrate binding induces closure and dimerization. A disulfide bond may lock the enzyme in a closed conformation preventing substrate entry into the catalytic chamber, participating in redox regulation of the enzyme. Inhibited by metal-chelating agents. Inhibited by nickel and zinc excess, and slightly activated by manganese. Its function is as follows. Metalloendopeptidase of the mitochondrial matrix that functions in peptide cleavage and degradation rather than in protein processing. Has an ATP-independent activity. Specifically cleaves peptides in the range of 5 to 65 residues. Shows a preference for cleavage after small polar residues and before basic residues, but without any positional preference. Degrades the transit peptides of mitochondrial proteins after their cleavage. Also degrades other unstructured peptides. This is Presequence protease, mitochondrial (pitrm1) from Xenopus laevis (African clawed frog).